The chain runs to 34 residues: Potassium channel toxin alpha-KTx 6.2 (34 aa).

4 disulfides stabilise this stretch: C3/C24, C9/C29, C13/C19, and C31/C34. Residue C34 is modified to Cysteine amide.

Belongs to the short scorpion toxin superfamily. Potassium channel inhibitor family. Alpha-KTx 06 subfamily. Expressed by the venom gland.

Its subcellular location is the secreted. Functionally, blocks voltage-gated potassium channels Kv1.2/KCNA2 (IC(50)=0.12-0.8 nM), KCa3.1/KCNN4 (IC(50)=1-2.2 nM), Shaker B (IC(50)=2.39-80 nM), Kv1.1/KCNA1 (IC(50)=37-45 or no activity, depending on the study), Kv1.3/KCNA3 (IC(50)=150-180 or no activity, depending on the study). This chain is Potassium channel toxin alpha-KTx 6.2, found in Scorpio palmatus (Israeli golden scorpion).